A 583-amino-acid polypeptide reads, in one-letter code: Aspartate--tRNA ligase (583 aa).

E174 serves as a coordination point for L-aspartate. The tract at residues Q198–K201 is aspartate. An L-aspartate-binding site is contributed by R220. ATP-binding positions include R220–E222 and Q229. H443 contacts L-aspartate. Residue E477 coordinates ATP. R484 contacts L-aspartate. G529–R532 is a binding site for ATP.

The protein belongs to the class-II aminoacyl-tRNA synthetase family. Type 1 subfamily. Homodimer.

It localises to the cytoplasm. It carries out the reaction tRNA(Asp) + L-aspartate + ATP = L-aspartyl-tRNA(Asp) + AMP + diphosphate. Catalyzes the attachment of L-aspartate to tRNA(Asp) in a two-step reaction: L-aspartate is first activated by ATP to form Asp-AMP and then transferred to the acceptor end of tRNA(Asp). In Streptococcus agalactiae serotype Ia (strain ATCC 27591 / A909 / CDC SS700), this protein is Aspartate--tRNA ligase.